The chain runs to 356 residues: MRVVVAGGGTAGHIEPALAVAEALRDKHGATVSALGTARGLETTLVPDRGFELHLIEPVPVPRKPNMDLLKLPFRVAKALGQARKALKDTDAQAVIGFGGYVSAPAYMAAKSLGLPFFVHEANARAGMANKLGVKLGGVGLNAVAGSGMDGDVVGIPIRAVLSGARDESAADRARDTWGLDKDRQTIFVTGGSQGSVSINKAVEQAVDQLVEAGFQVLHAVGKKNELPAAKPGYHPVPFIDDMQAAYTVADLIVCRSGAMTVAEVTAAGVPAIYVPLPHGNGEQALNAQAVIKAGAARQIDDADFTAQTLIDATLDILLHPSTHQSMSDAAKTSTAGNASTVIADMIAATINSQHN.

UDP-N-acetyl-alpha-D-glucosamine-binding positions include 10 to 12, N123, R159, S193, I240, and Q284; that span reads TAG.

Belongs to the glycosyltransferase 28 family. MurG subfamily.

It is found in the cell membrane. The catalysed reaction is di-trans,octa-cis-undecaprenyl diphospho-N-acetyl-alpha-D-muramoyl-L-alanyl-D-glutamyl-meso-2,6-diaminopimeloyl-D-alanyl-D-alanine + UDP-N-acetyl-alpha-D-glucosamine = di-trans,octa-cis-undecaprenyl diphospho-[N-acetyl-alpha-D-glucosaminyl-(1-&gt;4)]-N-acetyl-alpha-D-muramoyl-L-alanyl-D-glutamyl-meso-2,6-diaminopimeloyl-D-alanyl-D-alanine + UDP + H(+). It participates in cell wall biogenesis; peptidoglycan biosynthesis. In terms of biological role, cell wall formation. Catalyzes the transfer of a GlcNAc subunit on undecaprenyl-pyrophosphoryl-MurNAc-pentapeptide (lipid intermediate I) to form undecaprenyl-pyrophosphoryl-MurNAc-(pentapeptide)GlcNAc (lipid intermediate II). This chain is UDP-N-acetylglucosamine--N-acetylmuramyl-(pentapeptide) pyrophosphoryl-undecaprenol N-acetylglucosamine transferase, found in Corynebacterium glutamicum (strain ATCC 13032 / DSM 20300 / JCM 1318 / BCRC 11384 / CCUG 27702 / LMG 3730 / NBRC 12168 / NCIMB 10025 / NRRL B-2784 / 534).